We begin with the raw amino-acid sequence, 557 residues long: Aerobic glycerol-3-phosphate dehydrogenase (557 aa).

21-49 (DVVIIGGGITGAGIALDASQRGMKVALVE) serves as a coordination point for FAD.

The protein belongs to the FAD-dependent glycerol-3-phosphate dehydrogenase family. Requires FAD as cofactor.

The protein localises to the cytoplasm. It catalyses the reaction a quinone + sn-glycerol 3-phosphate = dihydroxyacetone phosphate + a quinol. The protein operates within polyol metabolism; glycerol degradation via glycerol kinase pathway; glycerone phosphate from sn-glycerol 3-phosphate (aerobic route): step 1/1. In Staphylococcus haemolyticus (strain JCSC1435), this protein is Aerobic glycerol-3-phosphate dehydrogenase (glpD).